The chain runs to 361 residues: MCETASTTLPPGITPISGDEARRLIHHTSGPELEALLDRAEAVRRAVHGDEVALCGITNAKSGRCPEDCGFCSQSARFEGADAPVYPMIGAGEIVEQAHKAERAGAREFSIVASGTRLAREQELATVEEALRRLRAETAVEPCASLGLMREPELRRLKDAGLMHYHHNLETARSHFENVCTTHTFDEQLETIRAAKGLGLKLCSGGILGMGETPEQRVEFAEEVRDLGVDCVPVNFLNPRAGTPLAHLKAITPEECLAALAVFRLMMPAAHIFVMGGREVNLGDRQDLIFRAGANGTMVGNYLTSAGRAPDLTVGMVERQGLTLRPPDTGKPWAFDGHAPSDADWNRKAAEPRPRPLPVVR.

Residues 47–278 enclose the Radical SAM core domain; it reads VHGDEVALCG…AAHIFVMGGR (232 aa). Residues Cys-65, Cys-69, and Cys-72 each contribute to the [4Fe-4S] cluster site. Ser-110, Cys-143, and Cys-203 together coordinate [2Fe-2S] cluster. Residues 323 to 361 are disordered; sequence TLRPPDTGKPWAFDGHAPSDADWNRKAAEPRPRPLPVVR. Basic and acidic residues predominate over residues 339 to 354; sequence APSDADWNRKAAEPRP.

Belongs to the radical SAM superfamily. Biotin synthase family. Homodimer. [4Fe-4S] cluster is required as a cofactor. The cofactor is [2Fe-2S] cluster.

It carries out the reaction (4R,5S)-dethiobiotin + (sulfur carrier)-SH + 2 reduced [2Fe-2S]-[ferredoxin] + 2 S-adenosyl-L-methionine = (sulfur carrier)-H + biotin + 2 5'-deoxyadenosine + 2 L-methionine + 2 oxidized [2Fe-2S]-[ferredoxin]. It participates in cofactor biosynthesis; biotin biosynthesis; biotin from 7,8-diaminononanoate: step 2/2. Functionally, catalyzes the conversion of dethiobiotin (DTB) to biotin by the insertion of a sulfur atom into dethiobiotin via a radical-based mechanism. This chain is Biotin synthase, found in Anaeromyxobacter sp. (strain K).